A 235-amino-acid polypeptide reads, in one-letter code: 7-cyano-7-deazaguanine synthase (235 aa).

9-19 (FSGGQDSTTCL) is an ATP binding site. Positions 197, 212, 215, and 218 each coordinate Zn(2+).

It belongs to the QueC family. Zn(2+) serves as cofactor.

It carries out the reaction 7-carboxy-7-deazaguanine + NH4(+) + ATP = 7-cyano-7-deazaguanine + ADP + phosphate + H2O + H(+). The protein operates within purine metabolism; 7-cyano-7-deazaguanine biosynthesis. Its function is as follows. Catalyzes the ATP-dependent conversion of 7-carboxy-7-deazaguanine (CDG) to 7-cyano-7-deazaguanine (preQ(0)). The protein is 7-cyano-7-deazaguanine synthase of Polaromonas sp. (strain JS666 / ATCC BAA-500).